The sequence spans 83 residues: ATP synthase subunit c (83 aa).

2 helical membrane passes run 10–30 and 52–72; these read IAVALLIGMGALGTAIGFGLL and MFIVAGLLDAVTMIGVGIALY.

Belongs to the ATPase C chain family. F-type ATPases have 2 components, F(1) - the catalytic core - and F(0) - the membrane proton channel. F(1) has five subunits: alpha(3), beta(3), gamma(1), delta(1), epsilon(1). F(0) has three main subunits: a(1), b(2) and c(10-14). The alpha and beta chains form an alternating ring which encloses part of the gamma chain. F(1) is attached to F(0) by a central stalk formed by the gamma and epsilon chains, while a peripheral stalk is formed by the delta and b chains.

It localises to the cell inner membrane. F(1)F(0) ATP synthase produces ATP from ADP in the presence of a proton or sodium gradient. F-type ATPases consist of two structural domains, F(1) containing the extramembraneous catalytic core and F(0) containing the membrane proton channel, linked together by a central stalk and a peripheral stalk. During catalysis, ATP synthesis in the catalytic domain of F(1) is coupled via a rotary mechanism of the central stalk subunits to proton translocation. Functionally, key component of the F(0) channel; it plays a direct role in translocation across the membrane. A homomeric c-ring of between 10-14 subunits forms the central stalk rotor element with the F(1) delta and epsilon subunits. The sequence is that of ATP synthase subunit c from Shewanella denitrificans (strain OS217 / ATCC BAA-1090 / DSM 15013).